The following is a 242-amino-acid chain: Protein crossbronx (242 aa).

The UBC core domain occupies 20–176 (QQEYKILAEY…VQENIKESKA (157 aa)).

The protein belongs to the ubiquitin-conjugating enzyme family. FTS subfamily.

The chain is Protein crossbronx (cbx) from Drosophila ananassae (Fruit fly).